We begin with the raw amino-acid sequence, 271 residues long: Shikimate dehydrogenase (NADP(+)) (271 aa).

Shikimate-binding positions include 14 to 16 (SRS) and threonine 61. The active-site Proton acceptor is lysine 65. Asparagine 86 and aspartate 102 together coordinate shikimate. NADP(+)-binding positions include 126–130 (GAGGA), 149–154 (NRTFSR), and methionine 213. Tyrosine 215 provides a ligand contact to shikimate. Glycine 238 contributes to the NADP(+) binding site.

It belongs to the shikimate dehydrogenase family. In terms of assembly, homodimer.

It carries out the reaction shikimate + NADP(+) = 3-dehydroshikimate + NADPH + H(+). It functions in the pathway metabolic intermediate biosynthesis; chorismate biosynthesis; chorismate from D-erythrose 4-phosphate and phosphoenolpyruvate: step 4/7. In terms of biological role, involved in the biosynthesis of the chorismate, which leads to the biosynthesis of aromatic amino acids. Catalyzes the reversible NADPH linked reduction of 3-dehydroshikimate (DHSA) to yield shikimate (SA). The sequence is that of Shikimate dehydrogenase (NADP(+)) from Histophilus somni (strain 129Pt) (Haemophilus somnus).